The primary structure comprises 113 residues: Dynein light chain Tctex-type 1 (113 aa).

The residue at position 1 (Met-1) is an N-acetylmethionine. Residues 41-113 are interaction with GNB1; that stretch reads QWTTNVVEQT…CIVSAFGLSI (73 aa).

The protein belongs to the dynein light chain Tctex-type family. Homodimer. The cytoplasmic dynein 1 complex consists of two catalytic heavy chains (HCs) and a number of non-catalytic subunits presented by intermediate chains (ICs), light intermediate chains (LICs) and light chains (LCs); the composition seems to vary in respect to the IC, LIC and LC composition. The heavy chain homodimer serves as a scaffold for the probable homodimeric assembly of the respective non-catalytic subunits. The ICs and LICs bind directly to the HC dimer and dynein LCs assemble on the IC dimer. DYNLT1 and DYNLT3 compete for association with dynein IC (DYNC1I1 or DYNC1I2). Self-associates. Interacts with RHO. Interacts with DYNC1I1 and DYNC1I2. Interacts with DOC2A, DOC2B and SCN10A. Interacts with PVR. Interacts with SVIL isoform 2. Interacts with GNB1; the interaction occurs in presence of guanine nucleotide-binding protein G(T) subunit gamma; the interaction diminishes the association of DYNLT1 with dynein IC (DYNC1I1 or DYNC1I2). Interacts with GNB2, GNB3 and GNB5; the interactions occur in presence of guanine nucleotide-binding protein G(T) subunit gamma. Interacts with ACVR2B and ARHGEF2. Interacts with DNAI4. Interacts with CFAP61. In terms of processing, phosphorylated by BMPR2. The phosphorylation status is proposed to regulate the association with the cytoplasmic dynein complex and may have role in cytoplasmic dynein cargo release.

It is found in the golgi apparatus. It localises to the cytoplasm. The protein resides in the cytoskeleton. Its subcellular location is the spindle. Functionally, acts as one of several non-catalytic accessory components of the cytoplasmic dynein 1 complex that are thought to be involved in linking dynein to cargos and to adapter proteins that regulate dynein function. Cytoplasmic dynein 1 acts as a motor for the intracellular retrograde motility of vesicles and organelles along microtubules. Binds to transport cargos and is involved in apical cargo transport such as rhodopsin-bearing vesicles in polarized epithelia. Is involved in intracellular targeting of D-type retrovirus gag polyproteins to the cytoplasmic assembly site. May also be a accessory component of axonemal dynein. Its function is as follows. Plays a role in neuronal morphogenesis; the function is independent of cytoplasmic dynein and seems to be coupled to regulation of the actin cytoskeleton by enhancing Rac1 activity. Required for neurite outgrowth. The function in neurogenesis may be regulated by association with a G-protein beta-gamma dimer. May function as a receptor-independent activator of heterotrimeric G-protein signaling; the activation appears to be independent of a nucleotide exchange. Plays a role in regulating neurogenesis; inhibits the genesis of neurons from precursor cells during cortical development presumably by antagonizing ARHGEF2. Unrelated to the role in retrograde microtubule-associated movement may play a role in the dimerization of cytoplasmic proteins/domains such as for ACVR2B. Binds to the cytoplasmic domain of ACVR2B and, in vitro, inhibits ACVR2B signaling. Involved in the regulation of mitotic spindle orientation. The protein is Dynein light chain Tctex-type 1 (Dynlt1) of Rattus norvegicus (Rat).